A 481-amino-acid chain; its full sequence is tRNA-guanine(15) transglycosylase (481 aa).

Asp87 functions as the Nucleophile in the catalytic mechanism. Substrate is bound by residues Asp122 and Ala191. Zn(2+)-binding residues include Cys273, Cys275, and Cys278.

The protein belongs to the archaeosine tRNA-ribosyltransferase family. Zn(2+) serves as cofactor.

The catalysed reaction is guanosine(15) in tRNA + 7-cyano-7-deazaguanine = 7-cyano-7-carbaguanosine(15) in tRNA + guanine. The protein operates within tRNA modification; archaeosine-tRNA biosynthesis. In terms of biological role, exchanges the guanine residue with 7-cyano-7-deazaguanine (preQ0) at position 15 in the dihydrouridine loop (D-loop) of archaeal tRNAs. In Archaeoglobus fulgidus (strain ATCC 49558 / DSM 4304 / JCM 9628 / NBRC 100126 / VC-16), this protein is tRNA-guanine(15) transglycosylase.